Consider the following 461-residue polypeptide: Dihydrolipoyl dehydrogenase (461 aa).

FAD-binding positions include 33-41, Lys-50, and Ala-112; that span reads EAAEVGGVC. Cys-41 and Cys-46 are oxidised to a cystine. NAD(+) contacts are provided by residues 173 to 177, Glu-196, and 263 to 266; these read GGGAV and AVGR. Residues Asp-306 and Ala-314 each coordinate FAD. His-437 (proton acceptor) is an active-site residue.

This sequence belongs to the class-I pyridine nucleotide-disulfide oxidoreductase family. Homodimer. It depends on FAD as a cofactor.

It is found in the membrane. It catalyses the reaction N(6)-[(R)-dihydrolipoyl]-L-lysyl-[protein] + NAD(+) = N(6)-[(R)-lipoyl]-L-lysyl-[protein] + NADH + H(+). Its function is as follows. Has chromate reductase activity. The polypeptide is Dihydrolipoyl dehydrogenase (Thermus scotoductus (strain ATCC 700910 / SA-01)).